Here is a 419-residue protein sequence, read N- to C-terminus: Acyl-coenzyme A thioesterase 1 (419 aa).

Catalysis depends on charge relay system residues Ser232, Asp324, and His358. At Ser416 the chain carries Phosphoserine.

The protein belongs to the C/M/P thioester hydrolase family. In terms of assembly, monomer. Expressed in heart, kidney, brown adipose tissue, white adipose tissue, adrenal gland and muscle.

It localises to the cytoplasm. Its subcellular location is the cytosol. It carries out the reaction hexadecanoyl-CoA + H2O = hexadecanoate + CoA + H(+). The enzyme catalyses decanoyl-CoA + H2O = decanoate + CoA + H(+). It catalyses the reaction dodecanoyl-CoA + H2O = dodecanoate + CoA + H(+). The catalysed reaction is tetradecanoyl-CoA + H2O = tetradecanoate + CoA + H(+). It carries out the reaction octadecanoyl-CoA + H2O = octadecanoate + CoA + H(+). The enzyme catalyses eicosanoyl-CoA + H2O = eicosanoate + CoA + H(+). It catalyses the reaction (9Z)-octadecenoyl-CoA + H2O = (9Z)-octadecenoate + CoA + H(+). The catalysed reaction is (9Z)-hexadecenoyl-CoA + H2O = (9Z)-hexadecenoate + CoA + H(+). It carries out the reaction (9E)-octadecenoyl-CoA + H2O = (9E)-octadecenoate + CoA + H(+). Its pathway is lipid metabolism; fatty acid metabolism. Catalyzes the hydrolysis of acyl-CoAs into free fatty acids and coenzyme A (CoASH), regulating their respective intracellular levels. More active towards saturated and unsaturated long chain fatty acyl-CoAs (C12-C20). This is Acyl-coenzyme A thioesterase 1 (Acot1) from Mus musculus (Mouse).